We begin with the raw amino-acid sequence, 119 residues long: Large ribosomal subunit protein uL14 (119 aa).

The protein belongs to the universal ribosomal protein uL14 family. In terms of assembly, part of the 50S ribosomal subunit. Forms a cluster with proteins L3 and L19. In the 70S ribosome, L14 and L19 interact and together make contacts with the 16S rRNA in bridges B5 and B8.

Functionally, binds to 23S rRNA. Forms part of two intersubunit bridges in the 70S ribosome. The protein is Large ribosomal subunit protein uL14 of Ehrlichia chaffeensis (strain ATCC CRL-10679 / Arkansas).